The sequence spans 219 residues: MKKTLVASSLAIGLGVVAGNAGHDAHASETTNVDKAELAQKALTNDQSLNESPVQEGAYNINFDYNGNSYHFESDGSTWSWSYESTNNATQPVQPSQSQVATQQQPVQVSAPQNEQTAQPQTKSTSTSQTSSSKASSGSSVNVNSHLQQIAQRESGGDIHAINPSSGAAGKYQFLQSTWDSVAPSQYKGVSPAKAPESVQDRAAVKLYNTGGPGHWVTA.

A signal peptide spans 1–27 (MKKTLVASSLAIGLGVVAGNAGHDAHA). Residues 86–143 (TNNATQPVQPSQSQVATQQQPVQVSAPQNEQTAQPQTKSTSTSQTSSSKASSGSSVNV) are disordered. The span at 89–140 (ATQPVQPSQSQVATQQQPVQVSAPQNEQTAQPQTKSTSTSQTSSSKASSGSS) shows a compositional bias: low complexity.

The protein belongs to the transglycosylase family. SceD subfamily.

It is found in the secreted. Is able to cleave peptidoglycan and affects clumping and separation of bacterial cells. The protein is Probable transglycosylase SceD (sceD) of Staphylococcus epidermidis (strain ATCC 35984 / DSM 28319 / BCRC 17069 / CCUG 31568 / BM 3577 / RP62A).